A 530-amino-acid chain; its full sequence is Nectin-2 (530 aa).

The N-terminal stretch at Met-1–Ala-31 is a signal peptide. Residues Gln-32–Leu-147 enclose the Ig-like V-type domain. Residues Gln-32 to Gly-351 are Extracellular-facing. A disulfide bond links Cys-54 and Cys-131. Residues Asn-128 and Asn-138 are each glycosylated (N-linked (GlcNAc...) asparagine). Ig-like C2-type domains follow at residues Pro-153 to Ser-247 and Pro-252 to Val-337. Cystine bridges form between Cys-174/Cys-229 and Cys-274/Cys-320. Residue Asn-315 is glycosylated (N-linked (GlcNAc...) asparagine). The helical transmembrane segment at Ile-352–Ile-372 threads the bilayer. Residues Cys-373 to Val-530 lie on the Cytoplasmic side of the membrane. The tract at residues Leu-382–Glu-407 is disordered. Thr-401 bears the Phosphothreonine mark. Ser-424 carries the phosphoserine modification.

Belongs to the nectin family. Can form trans-heterodimers with NECTIN3. Interacts with CD226 or with PVRIG; these interactions are competitive and have a differential functional outcome on T-cell activation, either positive or negative, respectively. Binds with low affinity to TIGIT. In terms of tissue distribution, brain, spinal cord, spleen, kidney, heart and liver.

Its subcellular location is the cell membrane. In terms of biological role, modulator of T-cell signaling. Can be either a costimulator of T-cell function, or a coinhibitor, depending on the receptor it binds to. Upon binding to CD226, stimulates T-cell proliferation and cytokine production, including that of IL2, IL5, IL10, IL13, and IFNG. Upon interaction with PVRIG, inhibits T-cell proliferation. These interactions are competitive. Probable cell adhesion protein. This chain is Nectin-2, found in Mus musculus (Mouse).